The chain runs to 274 residues: Formamidopyrimidine-DNA glycosylase (274 aa).

Catalysis depends on P2, which acts as the Schiff-base intermediate with DNA. E3 serves as the catalytic Proton donor. Catalysis depends on K57, which acts as the Proton donor; for beta-elimination activity. DNA-binding residues include H92, R111, and K152. The FPG-type zinc-finger motif lies at 237–271 (QVYGRKGEECNDCGSIIEAKVIGQRNSFYCPKCQR). The active-site Proton donor; for delta-elimination activity is R261.

Belongs to the FPG family. As to quaternary structure, monomer. Zn(2+) serves as cofactor.

The enzyme catalyses Hydrolysis of DNA containing ring-opened 7-methylguanine residues, releasing 2,6-diamino-4-hydroxy-5-(N-methyl)formamidopyrimidine.. The catalysed reaction is 2'-deoxyribonucleotide-(2'-deoxyribose 5'-phosphate)-2'-deoxyribonucleotide-DNA = a 3'-end 2'-deoxyribonucleotide-(2,3-dehydro-2,3-deoxyribose 5'-phosphate)-DNA + a 5'-end 5'-phospho-2'-deoxyribonucleoside-DNA + H(+). Its function is as follows. Involved in base excision repair of DNA damaged by oxidation or by mutagenic agents. Acts as a DNA glycosylase that recognizes and removes damaged bases. Has a preference for oxidized purines, such as 7,8-dihydro-8-oxoguanine (8-oxoG). Has AP (apurinic/apyrimidinic) lyase activity and introduces nicks in the DNA strand. Cleaves the DNA backbone by beta-delta elimination to generate a single-strand break at the site of the removed base with both 3'- and 5'-phosphates. In Glaesserella parasuis serovar 5 (strain SH0165) (Haemophilus parasuis), this protein is Formamidopyrimidine-DNA glycosylase.